Reading from the N-terminus, the 546-residue chain is Alpha-taxilin (546 aa).

Disordered regions lie at residues 1-170 (MKNQ…GLGK) and 482-546 (NKRV…SARA). Polar residues predominate over residues 11–21 (AKQSNPKSSPG). 2 stretches are compositionally biased toward basic and acidic residues: residues 70-80 (DVSEELSRQLE) and 143-158 (EEIRQSDEVGDRDHRR). Ser-72 carries the post-translational modification Phosphoserine. A coiled-coil region spans residues 186-491 (EEKLAALCKK…NKRVQDLSAG (306 aa)). Phosphoserine is present on Ser-515. The segment covering 530–546 (TEASGQTGPQEPTSARA) has biased composition (polar residues).

The protein belongs to the taxilin family. In terms of assembly, binds to the C-terminal coiled coil region of syntaxin family members STX1A, STX3A and STX4A, but not when these proteins are complexed with SNAP25, VAMP2 or STXBP1, suggesting that it interacts with syntaxins that do not form the SNARE complex. As to expression, ubiquitous, with much higher expression in heart, kidney, liver and pancreas.

In terms of biological role, may be involved in intracellular vesicle traffic and potentially in calcium-dependent exocytosis in neuroendocrine cells. The protein is Alpha-taxilin (TXLNA) of Homo sapiens (Human).